A 429-amino-acid chain; its full sequence is Serum response factor-binding protein 1 (429 aa).

Ala2 is subject to N-acetylalanine. Coiled-coil stretches lie at residues Lys42–Glu67 and Leu108–His144. 2 stretches are compositionally biased toward polar residues: residues Gln128–Asn138 and Lys146–Arg160. Disordered stretches follow at residues Gln128–Phe285 and Glu311–Asp429. Residues Asn183–Pro195 show a composition bias toward basic and acidic residues. Lys190 participates in a covalent cross-link: Glycyl lysine isopeptide (Lys-Gly) (interchain with G-Cter in SUMO2). Ser203, Ser205, Ser264, Ser279, and Ser281 each carry phosphoserine. Residues Gly249 to Thr265 are compositionally biased toward acidic residues. Positions Glu311–Glu341 are enriched in basic and acidic residues. Residue Lys316 forms a Glycyl lysine isopeptide (Lys-Gly) (interchain with G-Cter in SUMO2) linkage. Phosphoserine occurs at positions 349, 351, and 367. Residues Asn357–Ser367 show a composition bias toward basic and acidic residues. A compositionally biased stretch (polar residues) spans Asn373–Lys383.

As to quaternary structure, interacts with SRF. Forms complexes with SRF and SRF cofactors ARID2, MYOCD and NKX2-5. Interacts with the N-terminus of SLC2A4.

It localises to the cytoplasm. The protein localises to the perinuclear region. In terms of biological role, may be involved in regulating transcriptional activation of cardiac genes during the aging process. May play a role in biosynthesis and/or processing of SLC2A4 in adipose cells. In Pongo abelii (Sumatran orangutan), this protein is Serum response factor-binding protein 1.